The following is a 381-amino-acid chain: MKPQTRNTVVRMDPDTFFYNFYNRPILSHRNTVWLCYEVKMKTNDPSRPPLVANIFQGQVSFNPEHHAEMYFLSWFRGNLLPACKRSQITWFVSWNPCLYCVAKVAEFLAEHPKVTLTVSTARLYCYRKKDWRRALRKLSQTGARVKIMDYEEFQHCWDNFVDNQREPFEPWNALPKHYTLLRITLGEVLRHRMDPVTFTYNFTNDPSVLGQHQSYLCYKVEHLRNGTWVPLHQHRGFILNEASNSVSFPEGRHAELCLLDLISFWKLKQAQRYRVTCFISWSPCFSCAEKVAEFLQENPHVNLHISAARIYDYQRGYKKGLRRLDRAGTPISMMKYSEFKHCWDTFVDHQGHPFQPWEELNEHSQALSGRLQAILQNQGN.

The essential for cytoplasmic localization stretch occupies residues 1 to 62; that stretch reads MKPQTRNTVV…ANIFQGQVSF (62 aa). 2 consecutive CMP/dCMP-type deaminase domains span residues 29–143 and 211–325; these read HRNT…SQTG and GQHQ…LRRL. Thr32 is subject to Phosphothreonine; by PKA. Residues His67, Cys98, and Cys101 each coordinate Zn(2+). The interval 206 to 333 is necessary for homooligomerization; it reads DPSVLGQHQS…RLDRAGTPIS (128 aa). Positions 210–212 are interaction with DNA; it reads LGQ. His254 is a Zn(2+) binding site. Glu256 serves as the catalytic Proton donor. Residues Cys285 and Cys288 each coordinate Zn(2+). Residues 310 to 317 form an interaction with DNA region; sequence RIYDYQRG.

It belongs to the cytidine and deoxycytidylate deaminase family. As to quaternary structure, homodimer. Homooligomer. Can bind RNA to form ribonucleoprotein complexes of high-molecular-mass (HMM) or low-molecular-mass (LMM). HMM is inactive and heterogeneous in protein composition because of binding nonselectively to cellular RNAs, which in turn are associated with variety of cellular proteins. The LMM form which is enzymatically active has few or no RNAs associated. Its ability to form homooligomer is distinct from its ability to assemble into HMM. Interacts with APOBEC3B, APOBEC3F, MOV10, AGO2, EIF4E, EIF4ENIF1, DCP2 and DDX6 in an RNA-dependent manner. Interacts with AGO1, AGO3 and PKA/PRKACA. It depends on Zn(2+) as a cofactor.

It is found in the cytoplasm. It localises to the nucleus. The protein localises to the P-body. It catalyses the reaction a 2'-deoxycytidine in single-stranded DNA + H2O + H(+) = a 2'-deoxyuridine in single-stranded DNA + NH4(+). In terms of biological role, DNA deaminase (cytidine deaminase) which acts as an inhibitor of retrovirus replication and retrotransposon mobility. After the penetration of retroviral nucleocapsids into target cells of infection and the initiation of reverse transcription, it can induce the conversion of cytosine to uracil in the minus-sense single-strand viral DNA, leading to G-to-A hypermutations in the subsequent plus-strand viral DNA. The resultant detrimental levels of mutations in the proviral genome, along with a deamination-independent mechanism that works prior to the proviral integration, together exert efficient antiretroviral effects in infected target cells. Selectively targets single-stranded DNA and does not deaminate double-stranded DNA or single- or double-stranded RNA. In Lagothrix lagotricha (Brown woolly monkey), this protein is DNA dC-&gt;dU-editing enzyme APOBEC-3G (APOBEC3G).